We begin with the raw amino-acid sequence, 348 residues long: Phospho-2-dehydro-3-deoxyheptonate aldolase, Trp-sensitive (348 aa).

This sequence belongs to the class-I DAHP synthase family.

It catalyses the reaction D-erythrose 4-phosphate + phosphoenolpyruvate + H2O = 7-phospho-2-dehydro-3-deoxy-D-arabino-heptonate + phosphate. Its pathway is metabolic intermediate biosynthesis; chorismate biosynthesis; chorismate from D-erythrose 4-phosphate and phosphoenolpyruvate: step 1/7. In terms of biological role, stereospecific condensation of phosphoenolpyruvate (PEP) and D-erythrose-4-phosphate (E4P) giving rise to 3-deoxy-D-arabino-heptulosonate-7-phosphate (DAHP). The polypeptide is Phospho-2-dehydro-3-deoxyheptonate aldolase, Trp-sensitive (aroH) (Escherichia coli O157:H7).